Reading from the N-terminus, the 562-residue chain is Probable sesquiterpene synthase (562 aa).

Residues D315, D319, and E467 each coordinate Mg(2+). Residues 315 to 319 (DDIYD) carry the DDXXD motif motif.

The protein belongs to the terpene synthase family. Tpsa subfamily. Requires Mg(2+) as cofactor. Mn(2+) is required as a cofactor.

Functionally, sesquiterpene synthase. This Santalum austrocaledonicum (Sandalwood) protein is Probable sesquiterpene synthase (SesquiTPS).